The following is a 166-amino-acid chain: MLVIHDRIEPQAEWAAELHLNFEARSKSRLRCFSAENEDVGLFLQRGQSPLRDGEFLQAQDGRVVRVCARPEKLMHVTCSSTFELTRAAYHLGNRHVALQVGDGWLRLLDDYVLKAMLDQLGATVETIEAPFQPEHGAYGGGHHHSRAGEEDFNYPPRMHQFGVRK.

A disordered region spans residues 135 to 154 (EHGAYGGGHHHSRAGEEDFN).

Belongs to the UreE family.

The protein localises to the cytoplasm. Functionally, involved in urease metallocenter assembly. Binds nickel. Probably functions as a nickel donor during metallocenter assembly. The protein is Urease accessory protein UreE 2 of Pseudomonas syringae pv. syringae (strain B728a).